Reading from the N-terminus, the 456-residue chain is Protein odr-4 homolog (456 aa).

The span at 374–401 shows a compositional bias: low complexity; that stretch reads IESSKNNNNNNNNNNNNNNNNNNNNSKL. Positions 374–403 are disordered; that stretch reads IESSKNNNNNNNNNNNNNNNNNNNNSKLSN. The helical transmembrane segment at 436–456 threads the bilayer; the sequence is YLIIIISVLVLMVAFYFKFFV.

This sequence belongs to the ODR-4 family.

It localises to the membrane. Its function is as follows. May play a role in the trafficking of a subset of G-protein coupled receptors. The sequence is that of Protein odr-4 homolog from Dictyostelium discoideum (Social amoeba).